The following is a 404-amino-acid chain: Cysteine desulfurase IscS (404 aa).

Pyridoxal 5'-phosphate is bound by residues 75–76, Asn-155, Gln-183, and 203–205; these read AT and SGH. Lys-206 carries the N6-(pyridoxal phosphate)lysine modification. Thr-243 provides a ligand contact to pyridoxal 5'-phosphate. The Cysteine persulfide intermediate role is filled by Cys-328. A [2Fe-2S] cluster-binding site is contributed by Cys-328.

The protein belongs to the class-V pyridoxal-phosphate-dependent aminotransferase family. NifS/IscS subfamily. As to quaternary structure, homodimer. Forms a heterotetramer with IscU, interacts with other sulfur acceptors. Pyridoxal 5'-phosphate serves as cofactor.

The protein localises to the cytoplasm. The catalysed reaction is (sulfur carrier)-H + L-cysteine = (sulfur carrier)-SH + L-alanine. It participates in cofactor biosynthesis; iron-sulfur cluster biosynthesis. In terms of biological role, master enzyme that delivers sulfur to a number of partners involved in Fe-S cluster assembly, tRNA modification or cofactor biosynthesis. Catalyzes the removal of elemental sulfur and selenium atoms from cysteine and selenocysteine to produce alanine. Functions as a sulfur delivery protein for Fe-S cluster synthesis onto IscU, an Fe-S scaffold assembly protein, as well as other S acceptor proteins. Also functions as a selenium delivery protein in the pathway for the biosynthesis of selenophosphate. This Salmonella typhi protein is Cysteine desulfurase IscS.